We begin with the raw amino-acid sequence, 250 residues long: 3-deoxy-manno-octulosonate cytidylyltransferase (250 aa).

This sequence belongs to the KdsB family.

Its subcellular location is the cytoplasm. The enzyme catalyses 3-deoxy-alpha-D-manno-oct-2-ulosonate + CTP = CMP-3-deoxy-beta-D-manno-octulosonate + diphosphate. The protein operates within nucleotide-sugar biosynthesis; CMP-3-deoxy-D-manno-octulosonate biosynthesis; CMP-3-deoxy-D-manno-octulosonate from 3-deoxy-D-manno-octulosonate and CTP: step 1/1. It participates in bacterial outer membrane biogenesis; lipopolysaccharide biosynthesis. Functionally, activates KDO (a required 8-carbon sugar) for incorporation into bacterial lipopolysaccharide in Gram-negative bacteria. This Azorhizobium caulinodans (strain ATCC 43989 / DSM 5975 / JCM 20966 / LMG 6465 / NBRC 14845 / NCIMB 13405 / ORS 571) protein is 3-deoxy-manno-octulosonate cytidylyltransferase.